A 332-amino-acid chain; its full sequence is Beta-ketoacyl-[acyl-carrier-protein] synthase III 2 (332 aa).

Catalysis depends on residues Cys-115 and His-252. The segment at 253-257 is ACP-binding; sequence SANLR. The active site involves Asn-282.

It belongs to the thiolase-like superfamily. FabH family. As to quaternary structure, homodimer.

It is found in the cytoplasm. It carries out the reaction malonyl-[ACP] + acetyl-CoA + H(+) = 3-oxobutanoyl-[ACP] + CO2 + CoA. Its pathway is lipid metabolism; fatty acid biosynthesis. Its function is as follows. Catalyzes the condensation reaction of fatty acid synthesis by the addition to an acyl acceptor of two carbons from malonyl-ACP. Catalyzes the first condensation reaction which initiates fatty acid synthesis and may therefore play a role in governing the total rate of fatty acid production. Possesses both acetoacetyl-ACP synthase and acetyl transacylase activities. Its substrate specificity determines the biosynthesis of branched-chain and/or straight-chain of fatty acids. The polypeptide is Beta-ketoacyl-[acyl-carrier-protein] synthase III 2 (Halalkalibacterium halodurans (strain ATCC BAA-125 / DSM 18197 / FERM 7344 / JCM 9153 / C-125) (Bacillus halodurans)).